A 320-amino-acid chain; its full sequence is Malate dehydrogenase (320 aa).

NAD(+) is bound by residues 10-15 (GSGMIG) and aspartate 34. The substrate site is built by arginine 83 and arginine 89. Residues asparagine 96 and 119 to 121 (ITN) each bind NAD(+). Substrate is bound by residues asparagine 121 and arginine 152. Histidine 176 (proton acceptor) is an active-site residue.

It belongs to the LDH/MDH superfamily. MDH type 3 family.

The catalysed reaction is (S)-malate + NAD(+) = oxaloacetate + NADH + H(+). Functionally, catalyzes the reversible oxidation of malate to oxaloacetate. The polypeptide is Malate dehydrogenase (Rhizobium meliloti (strain 1021) (Ensifer meliloti)).